The sequence spans 404 residues: Acetate kinase (404 aa).

A Mg(2+)-binding site is contributed by N7. K14 lines the ATP pocket. R91 is a binding site for substrate. D148 (proton donor/acceptor) is an active-site residue. Residues 208–212 and 283–285 contribute to the ATP site; these read HLGNG and DLR. E388 is a Mg(2+) binding site.

This sequence belongs to the acetokinase family. In terms of assembly, homodimer. Mg(2+) is required as a cofactor. Mn(2+) serves as cofactor.

Its subcellular location is the cytoplasm. It carries out the reaction acetate + ATP = acetyl phosphate + ADP. It functions in the pathway metabolic intermediate biosynthesis; acetyl-CoA biosynthesis; acetyl-CoA from acetate: step 1/2. Its function is as follows. Catalyzes the formation of acetyl phosphate from acetate and ATP. Can also catalyze the reverse reaction. The protein is Acetate kinase of Borrelia turicatae (strain 91E135).